Consider the following 105-residue polypeptide: Putative thioredoxin-5 (105 aa).

Residues 1-104 form the Thioredoxin domain; it reads MYKEPKNESE…VALENMVKKL (104 aa). Active-site nucleophile residues include Cys-30 and Cys-33. An intrachain disulfide couples Cys-30 to Cys-33.

It belongs to the thioredoxin family.

Its function is as follows. Participates in various redox reactions through the reversible oxidation of its active center dithiol to a disulfide and catalyzes dithiol-disulfide exchange reactions. The chain is Putative thioredoxin-5 (trxE) from Dictyostelium discoideum (Social amoeba).